Here is a 358-residue protein sequence, read N- to C-terminus: Photosystem II protein D1 (358 aa).

3 consecutive transmembrane segments (helical) span residues Y29 to I46, H116 to L131, and W140 to S154. H116 provides a ligand contact to chlorophyll a. A pheophytin a-binding site is contributed by W124. D168 and E187 together coordinate [CaMn4O5] cluster. Residues F195–L216 form a helical membrane-spanning segment. H196 contributes to the chlorophyll a binding site. A quinone-binding positions include H213 and S262–F263. H213 is a Fe cation binding site. H270 is a binding site for Fe cation. The chain crosses the membrane as a helical span at residues F272 to L286. Residues H330, E331, D340, and A342 each coordinate [CaMn4O5] cluster. Residues A343–G358 constitute a propeptide that is removed on maturation.

The protein belongs to the reaction center PufL/M/PsbA/D family. In terms of assembly, PSII is composed of 1 copy each of membrane proteins PsbA, PsbB, PsbC, PsbD, PsbE, PsbF, PsbH, PsbI, PsbJ, PsbK, PsbL, PsbM, PsbT, PsbX, PsbY, PsbZ, Psb30/Ycf12, peripheral proteins PsbO, CyanoQ (PsbQ), PsbU, PsbV and a large number of cofactors. It forms dimeric complexes. It depends on The D1/D2 heterodimer binds P680, chlorophylls that are the primary electron donor of PSII, and subsequent electron acceptors. It shares a non-heme iron and each subunit binds pheophytin, quinone, additional chlorophylls, carotenoids and lipids. D1 provides most of the ligands for the Mn4-Ca-O5 cluster of the oxygen-evolving complex (OEC). There is also a Cl(-1) ion associated with D1 and D2, which is required for oxygen evolution. The PSII complex binds additional chlorophylls, carotenoids and specific lipids. as a cofactor. Post-translationally, tyr-159 forms a radical intermediate that is referred to as redox-active TyrZ, YZ or Y-Z. C-terminally processed by CtpA; processing is essential to allow assembly of the oxygen-evolving complex and thus photosynthetic growth.

The protein localises to the cellular thylakoid membrane. It carries out the reaction 2 a plastoquinone + 4 hnu + 2 H2O = 2 a plastoquinol + O2. In terms of biological role, photosystem II (PSII) is a light-driven water:plastoquinone oxidoreductase that uses light energy to abstract electrons from H(2)O, generating O(2) and a proton gradient subsequently used for ATP formation. It consists of a core antenna complex that captures photons, and an electron transfer chain that converts photonic excitation into a charge separation. The D1/D2 (PsbA/PsbD) reaction center heterodimer binds P680, the primary electron donor of PSII as well as several subsequent electron acceptors. In Mastigocladus laminosus (Fischerella sp.), this protein is Photosystem II protein D1.